The primary structure comprises 220 residues: Iron-sulfur cluster repair protein YtfE (220 aa).

This sequence belongs to the RIC family. YtfE subfamily. As to quaternary structure, homodimer.

The protein resides in the cytoplasm. In terms of biological role, di-iron-containing protein involved in the repair of iron-sulfur clusters damaged by oxidative and nitrosative stress conditions. The sequence is that of Iron-sulfur cluster repair protein YtfE from Enterobacter sp. (strain 638).